The primary structure comprises 256 residues: DNA repair protein RecO (256 aa).

It belongs to the RecO family.

Involved in DNA repair and RecF pathway recombination. The sequence is that of DNA repair protein RecO from Anaeromyxobacter sp. (strain Fw109-5).